We begin with the raw amino-acid sequence, 1058 residues long: Isoleucine--tRNA ligase (1058 aa).

The 'HIGH' region signature appears at 48-58 (PYTTGHIHLGT). The short motif at 596–600 (KMSKS) is the 'KMSKS' region element. Position 599 (Lys599) interacts with ATP.

This sequence belongs to the class-I aminoacyl-tRNA synthetase family. IleS type 2 subfamily. Monomer. Requires Zn(2+) as cofactor.

Its subcellular location is the cytoplasm. It carries out the reaction tRNA(Ile) + L-isoleucine + ATP = L-isoleucyl-tRNA(Ile) + AMP + diphosphate. Functionally, catalyzes the attachment of isoleucine to tRNA(Ile). As IleRS can inadvertently accommodate and process structurally similar amino acids such as valine, to avoid such errors it has two additional distinct tRNA(Ile)-dependent editing activities. One activity is designated as 'pretransfer' editing and involves the hydrolysis of activated Val-AMP. The other activity is designated 'posttransfer' editing and involves deacylation of mischarged Val-tRNA(Ile). The sequence is that of Isoleucine--tRNA ligase from Methanosarcina barkeri (strain Fusaro / DSM 804).